Here is a 172-residue protein sequence, read N- to C-terminus: MDLRKKIRIVENFPIEGISFKDVTPILKDPKAMKHTTKEIAKYLEDKNVDVVVGPEARGFLFGVPVAHELDIGFVPVRKPGKLPYKTFSVDYALEYGSDSLEIHSDGIEKGQNVAIVDDLLATGGTVLGVSKLVEKLGGHVSALNFVIELTELKGRDKLKGYDIQSLVKYDL.

The protein belongs to the purine/pyrimidine phosphoribosyltransferase family. As to quaternary structure, homodimer.

The protein localises to the cytoplasm. It carries out the reaction AMP + diphosphate = 5-phospho-alpha-D-ribose 1-diphosphate + adenine. Its pathway is purine metabolism; AMP biosynthesis via salvage pathway; AMP from adenine: step 1/1. Catalyzes a salvage reaction resulting in the formation of AMP, that is energically less costly than de novo synthesis. In Methanococcus maripaludis (strain DSM 14266 / JCM 13030 / NBRC 101832 / S2 / LL), this protein is Adenine phosphoribosyltransferase.